A 617-amino-acid polypeptide reads, in one-letter code: Vacuolar protein sorting-associated protein 33B (617 aa).

At Ala-2 the chain carries N-acetylalanine.

This sequence belongs to the STXBP/unc-18/SEC1 family. As to quaternary structure, interacts with RAB11A and VIPAS39. Associates with adaptor protein complex 3 (AP-3), clathrin:AP-3 and clathrin:HGS complexes. Post-translationally, phosphorylated on tyrosine residues. In terms of tissue distribution, ubiquitous.

The protein localises to the late endosome membrane. It localises to the lysosome membrane. Its subcellular location is the early endosome. The protein resides in the cytoplasmic vesicle. It is found in the clathrin-coated vesicle. The protein localises to the recycling endosome. Functionally, may play a role in vesicle-mediated protein trafficking to lysosomal compartments and in membrane docking/fusion reactions of late endosomes/lysosomes. Mediates phagolysosomal fusion in macrophages. Proposed to be involved in endosomal maturation implicating VIPAS39. In epithelial cells, the VPS33B:VIPAS39 complex may play a role in the apical recycling pathway and in the maintenance of the apical-basolateral polarity. Seems to be involved in the sorting of specific cargos from the trans-Golgi network to alpha-granule-destined multivesicular bodies (MVBs) promoting MVBs maturation in megakaryocytes. This Rattus norvegicus (Rat) protein is Vacuolar protein sorting-associated protein 33B (Vps33b).